Reading from the N-terminus, the 449-residue chain is Glucose-6-phosphate isomerase (449 aa).

The Proton donor role is filled by Glu291. Catalysis depends on residues His312 and Lys426.

The protein belongs to the GPI family.

It is found in the cytoplasm. It carries out the reaction alpha-D-glucose 6-phosphate = beta-D-fructose 6-phosphate. It functions in the pathway carbohydrate biosynthesis; gluconeogenesis. The protein operates within carbohydrate degradation; glycolysis; D-glyceraldehyde 3-phosphate and glycerone phosphate from D-glucose: step 2/4. Catalyzes the reversible isomerization of glucose-6-phosphate to fructose-6-phosphate. This Streptococcus pneumoniae serotype 19F (strain G54) protein is Glucose-6-phosphate isomerase.